Here is a 458-residue protein sequence, read N- to C-terminus: F-box/FBD/LRR-repeat protein At1g78750 (458 aa).

The F-box domain occupies Val17–Phe67. 5 LRR repeats span residues Cys152–Ile183, Val184–Arg209, Val231–Asp258, Asp302–Ser327, and Phe345–Ser370. Residues Lys376–Leu428 enclose the FBD domain.

This is F-box/FBD/LRR-repeat protein At1g78750 from Arabidopsis thaliana (Mouse-ear cress).